We begin with the raw amino-acid sequence, 274 residues long: NH(3)-dependent NAD(+) synthetase (274 aa).

46 to 53 is a binding site for ATP; that stretch reads GISGGQDS. Asp-52 contributes to the Mg(2+) binding site. Arg-140 is a binding site for deamido-NAD(+). Thr-160 is a binding site for ATP. Glu-165 provides a ligand contact to Mg(2+). Residues Lys-173 and Asp-180 each contribute to the deamido-NAD(+) site. Positions 189 and 211 each coordinate ATP. 260–261 provides a ligand contact to deamido-NAD(+); it reads HK.

It belongs to the NAD synthetase family. Homodimer.

It catalyses the reaction deamido-NAD(+) + NH4(+) + ATP = AMP + diphosphate + NAD(+) + H(+). It participates in cofactor biosynthesis; NAD(+) biosynthesis; NAD(+) from deamido-NAD(+) (ammonia route): step 1/1. Catalyzes the ATP-dependent amidation of deamido-NAD to form NAD. Uses ammonia as a nitrogen source. The chain is NH(3)-dependent NAD(+) synthetase from Streptococcus pneumoniae (strain Hungary19A-6).